We begin with the raw amino-acid sequence, 169 residues long: Lutropin/choriogonadotropin subunit beta (169 aa).

A signal peptide spans 1–20 (METLQGLLLWMLLSVGGVWA). Disulfide bonds link Cys-29–Cys-77, Cys-43–Cys-92, Cys-46–Cys-130, Cys-54–Cys-108, Cys-58–Cys-110, and Cys-113–Cys-120. An N-linked (GlcNAc...) asparagine glycan is attached at Asn-33. Positions 131–169 (APQASSSSKDPPSQPLTSTSTPTPGASRRSSHPLPIKTS) are disordered. O-linked (GalNAc...) serine glycans are attached at residues Ser-138 and Ser-143. A compositionally biased stretch (low complexity) spans 145-158 (PLTSTSTPTPGASR). An O-linked (GalNAc...) threonine glycan is attached at Thr-147. Ser-148 carries an O-linked (GalNAc...) serine glycan. Thr-149 carries O-linked (GalNAc...) threonine glycosylation. A glycan (O-linked (GalNAc...) serine) is linked at Ser-150. Thr-151 and Thr-153 each carry an O-linked (GalNAc...) threonine glycan. O-linked (GalNAc...) serine glycans are attached at residues Ser-157, Ser-160, Ser-161, and Ser-169.

The protein belongs to the glycoprotein hormones subunit beta family. In terms of assembly, heterodimer of a common alpha chain and a unique beta chain which confers biological specificity to thyrotropin, lutropin, follitropin and gonadotropin. Post-translationally, microheterogeneity at Asn-33. O-glycosylation appears to be responsible for the beta subunit contribution to the difference in LH-receptor binding activity between LSH-B and CG-B.

Its subcellular location is the secreted. Functionally, promotes spermatogenesis and ovulation by stimulating the testes and ovaries to synthesize steroids. The chain is Lutropin/choriogonadotropin subunit beta (LHB) from Equus caballus (Horse).